The chain runs to 203 residues: Proteasome subunit beta 1 (203 aa).

Residues M1–G7 constitute a propeptide, removed in mature form; by autocatalysis. T8 acts as the Nucleophile in catalysis.

This sequence belongs to the peptidase T1B family. The 20S proteasome core is composed of 14 alpha and 14 beta subunits that assemble into four stacked heptameric rings, resulting in a barrel-shaped structure. The two inner rings, each composed of seven catalytic beta subunits, are sandwiched by two outer rings, each composed of seven alpha subunits. The catalytic chamber with the active sites is on the inside of the barrel. Has a gated structure, the ends of the cylinder being occluded by the N-termini of the alpha-subunits. Is capped at one or both ends by the proteasome regulatory ATPase, PAN.

It localises to the cytoplasm. It catalyses the reaction Cleavage of peptide bonds with very broad specificity.. With respect to regulation, the formation of the proteasomal ATPase PAN-20S proteasome complex, via the docking of the C-termini of PAN into the intersubunit pockets in the alpha-rings, triggers opening of the gate for substrate entry. Interconversion between the open-gate and close-gate conformations leads to a dynamic regulation of the 20S proteasome proteolysis activity. Component of the proteasome core, a large protease complex with broad specificity involved in protein degradation. This is Proteasome subunit beta 1 from Thermococcus onnurineus (strain NA1).